The chain runs to 325 residues: GTP 3',8-cyclase (325 aa).

Residues 10 to 229 (GYGRRINYLR…PSLEKIKSED (220 aa)) enclose the Radical SAM core domain. R19 contributes to the GTP binding site. [4Fe-4S] cluster-binding residues include C26 and C30. Y32 serves as a coordination point for S-adenosyl-L-methionine. C33 contacts [4Fe-4S] cluster. A GTP-binding site is contributed by R69. Residue G73 coordinates S-adenosyl-L-methionine. T100 contributes to the GTP binding site. S124 lines the S-adenosyl-L-methionine pocket. K161 serves as a coordination point for GTP. M195 contacts S-adenosyl-L-methionine. The [4Fe-4S] cluster site is built by C257 and C260. 262 to 264 (RLR) contributes to the GTP binding site. C274 is a binding site for [4Fe-4S] cluster.

Belongs to the radical SAM superfamily. MoaA family. As to quaternary structure, monomer and homodimer. The cofactor is [4Fe-4S] cluster.

The enzyme catalyses GTP + AH2 + S-adenosyl-L-methionine = (8S)-3',8-cyclo-7,8-dihydroguanosine 5'-triphosphate + 5'-deoxyadenosine + L-methionine + A + H(+). Its pathway is cofactor biosynthesis; molybdopterin biosynthesis. Functionally, catalyzes the cyclization of GTP to (8S)-3',8-cyclo-7,8-dihydroguanosine 5'-triphosphate. This Peptoclostridium acidaminophilum (Eubacterium acidaminophilum) protein is GTP 3',8-cyclase.